We begin with the raw amino-acid sequence, 465 residues long: Amino-acid carrier protein AlsT (465 aa).

The next 10 helical transmembrane spans lie at 20–40 (LFYI…FIQF), 82–102 (VALA…VVAA), 142–162 (WLGI…FNAV), 177–197 (VNKI…IFGG), 208–228 (IVPV…ITNI), 241–261 (NALG…VIGA), 296–316 (LGVF…ILLY), 336–356 (IGGW…FSSV), 382–402 (IAVI…VWDM), and 405–425 (LFMG…SNVA).

Belongs to the alanine or glycine:cation symporter (AGCS) (TC 2.A.25) family.

The protein resides in the cell membrane. This is Amino-acid carrier protein AlsT (alsT) from Bacillus subtilis (strain 168).